The chain runs to 66 residues: UPF0434 protein Mnod_1613 (66 aa).

This sequence belongs to the UPF0434 family.

The chain is UPF0434 protein Mnod_1613 from Methylobacterium nodulans (strain LMG 21967 / CNCM I-2342 / ORS 2060).